A 1120-amino-acid polypeptide reads, in one-letter code: MWLKPEEVLLKNALKLWLMERSNDYFVLQRRRGYGEEGGGGLTGLLVGTLDSVLDSTAKVAPFRILHQTPDSQVYLSIACGANREEITKHWDWLEQNIMKTLSVFDSNEDITNFVQGKIRGLIAEEGKHCFAKEDDPEKFREALLKFEKCFGLPEKEKLVTYYSCSYWKGRVPCQGWLYLSTNFLSFYSFLLGSEIKLIISWDEVSKLEKTSNVILTESIHVCSQGENHYFSMFLHINQTYLLMEQLANYAIRRLFDKETFDNDPVLYNPLQITKRGLENRAHSEQFNAFFRLPKGESLKEVHECFLWVPFSHFNTHGKMCISENYICFASQDGNQCSVIIPLREVLAIDKTNDSSKSVIISIKGKTAFRFHEVKDFEQLVAKLRLRCGAASTQYHDISTELAISSESTEPSDNFEVQSLTSQRECSKTVNTEALMTVFHPQNLETLNSKMLKEKMKEQSWKILFAECGRGVSMFRTKKTRDLVVRGIPETLRGELWMLFSGAVNDMATNPDYYTEVVEQSLGTCNLATEEIERDLRRSLPEHPAFQSDTGISALRRVLTAYAYRNPKIGYCQAMNILTSVLLLYAKEEEAFWLLVAVCERMLPDYFNRRIIGALVDQAVFEELIRDHLPQLTEHMTDMTFFSSVSLSWFLTLFISVLPIESAVNVVDCFFYDGIKAILQLGLAILDYNLDKLLTCKDDAEAVTALNRFFDNVTNKDSPLPSNVQQGSNVSDEKTSHTRVDITDLIRESNEKYGNIRYEDIHSMRCRNRLYVIQTLEETTKQNVLRVVSQDVKLSLQELDELYVIFKKELFLSCYWCLGCPVLKHHDPSLPYLEQYQIDCQQFRALYHLLSPWAHSANKDSLALWTFRLLDENSDCLINFKEFSSAIDIMYNGSFTEKLKLLFKLHIPPAYTEVKSKDASKGDELSKEELLYFSQLHVSKPANEKEAESAKHSPEKGKGKIDIQAYLSQWQDELFKKEENIKDLPRMNQSQFIQFSKTLYNLFHEDPEEESLYQAIAVVTSLLLRMEEVGRKLHSPTSSAKGFSGTVCGSGGPSEEKTGSHLEKDPCSFREEPQWSFAFEQILASLLNEPALVRFFEKPIDVKAKLENARISQLRSRTKM.

2 consecutive GRAM domains span residues 145 to 212 and 285 to 353; these read LKFE…EKTS and EQFN…DKTN. The 188-residue stretch at 487–674 folds into the Rab-GAP TBC domain; that stretch reads GIPETLRGEL…NVVDCFFYDG (188 aa). Residues 858-893 form the EF-hand domain; sequence NKDSLALWTFRLLDENSDCLINFKEFSSAIDIMYNG. The segment at 1035 to 1066 is disordered; it reads SPTSSAKGFSGTVCGSGGPSEEKTGSHLEKDP. The segment covering 1054-1066 has biased composition (basic and acidic residues); the sequence is SEEKTGSHLEKDP.

Interacts (via domain Rab-GAP TBC) with RAB11B (in GTP-bound form). As to expression, kidney (at protein level).

It localises to the cytoplasm. The protein localises to the cytosol. Involved in vesicular recycling, probably as a RAB11B GTPase-activating protein. In Homo sapiens (Human), this protein is TBC1 domain family member 8B (TBC1D8B).